The following is a 728-amino-acid chain: Methylmalonyl-CoA mutase large subunit (728 aa).

Residues Tyr-75, Met-78, Arg-82, Thr-85, Arg-87, Tyr-89, and Ser-114 each coordinate (R)-methylmalonyl-CoA. Cob(II)alamin-binding residues include Phe-117 and Ala-139. 2 residues coordinate (R)-methylmalonyl-CoA: Thr-195 and Gln-197. The cob(II)alamin site is built by Val-206 and Arg-207. (R)-methylmalonyl-CoA is bound by residues Arg-207, His-244, Arg-283, and Ser-285. Residues Gly-333, Glu-370, Ala-373, Gly-609, His-610, Asp-611, Arg-612, Ser-655, Leu-657, Gly-686, and Thr-709 each coordinate cob(II)alamin. The B12-binding domain occupies 597–728; sequence RPRILLAKMG…VKKLRASLDA (132 aa).

The protein belongs to the methylmalonyl-CoA mutase family. As to quaternary structure, heterodimer of an alpha and a beta chain. Requires adenosylcob(III)alamin as cofactor.

It carries out the reaction (R)-methylmalonyl-CoA = succinyl-CoA. Its function is as follows. Catalyzes the reversible conversion of succinyl-CoA to (R)-methylmalonyl-CoA through a radical mechanism. Is involved in the fermentation of pyruvate to propanoate that occurs in Propionibacteria. The chain is Methylmalonyl-CoA mutase large subunit (mutB) from Propionibacterium freudenreichii subsp. shermanii.